A 433-amino-acid polypeptide reads, in one-letter code: MNNSEIININGPFKGEIEVPGDKSMTHRAIMLASLAKGISTIYEPLMGEDCRRTMDIFKLLGVTIEEQDNSIIINSPGYQNFITPHQVLYTGNSGTTTRLLAGLLSGLGIESVLSGDVSIGKRPMDRVMKPLLKMNANISGIDNNYTPLIIKPSTIKGINYQMEVASAQVKSAILLASLFSKEATTLTEFDVSRNHTETLFAHFNIPISIQGKTIQTIPYAIEHIQPRDFHVPGDISSAAFFIVAALITPGSDITIHNVGINPTRSGIIDIVKQMGGNIELSNVSKGAEPTASIHVKYTPNLNAVTIKGDLVPRAIDELPVIALLCTQASNSCIIKNAEELKVKETNRIDTTADMLNLLGFNLQPTHDGLIIHPSEFRSNATVDSQTDHRIGMMLAVASLLSSEPLKIEQFDAVNVSFPGFLPKLKLLENEGK.

Residues lysine 23, serine 24, and arginine 28 each contribute to the 3-phosphoshikimate site. Phosphoenolpyruvate is bound at residue lysine 23. Residues glycine 95 and arginine 123 each contribute to the phosphoenolpyruvate site. Serine 167, glutamine 169, aspartate 317, and lysine 344 together coordinate 3-phosphoshikimate. Glutamine 169 is a phosphoenolpyruvate binding site. The active-site Proton acceptor is the aspartate 317. Phosphoenolpyruvate is bound by residues arginine 348 and arginine 390.

The protein belongs to the EPSP synthase family. Monomer.

Its subcellular location is the cytoplasm. The enzyme catalyses 3-phosphoshikimate + phosphoenolpyruvate = 5-O-(1-carboxyvinyl)-3-phosphoshikimate + phosphate. The protein operates within metabolic intermediate biosynthesis; chorismate biosynthesis; chorismate from D-erythrose 4-phosphate and phosphoenolpyruvate: step 6/7. Catalyzes the transfer of the enolpyruvyl moiety of phosphoenolpyruvate (PEP) to the 5-hydroxyl of shikimate-3-phosphate (S3P) to produce enolpyruvyl shikimate-3-phosphate and inorganic phosphate. This Staphylococcus epidermidis (strain ATCC 35984 / DSM 28319 / BCRC 17069 / CCUG 31568 / BM 3577 / RP62A) protein is 3-phosphoshikimate 1-carboxyvinyltransferase.